The following is a 317-amino-acid chain: RHOMBOID-like protein 2 (317 aa).

The next 7 helical transmembrane spans lie at 33–53, 118–138, 149–169, 172–192, 202–222, 224–244, and 272–292; these read SWLIPAIVVANLAVFIAVMFV, WLHAGIIHLLTNMLSLIFIGI, VGLIYLISGLGGSILSSLFLQ, ISVGASGALFGLLGAMLSELL, AAALITLLFIIAINLALGMLP, VDNFAHIGGFLTGFCLGFVLL, and LFVVSVVLLVVGLTVALVMLF. Ser-177 functions as the Nucleophile in the catalytic mechanism. His-229 (charge relay system) is an active-site residue.

Belongs to the peptidase S54 family. As to expression, expressed in roots, seedlings, leaves, stems and flowers.

The protein resides in the golgi apparatus membrane. It catalyses the reaction Cleaves type-1 transmembrane domains using a catalytic dyad composed of serine and histidine that are contributed by different transmembrane domains.. Rhomboid-type serine protease that catalyzes intramembrane proteolysis. Can cleave the Drosophila proteins Spitz and Keren. May function in pollen elongation. This Arabidopsis thaliana (Mouse-ear cress) protein is RHOMBOID-like protein 2.